A 291-amino-acid chain; its full sequence is Transmembrane O-methyltransferase (291 aa).

The helical transmembrane segment at 31-51 threads the bilayer; that stretch reads VGTMSPAIALAFLPLVVTLLV. S-adenosyl-L-methionine-binding positions include E137, 139–140, S145, E163, and S193; that span reads GT.

This sequence belongs to the class I-like SAM-binding methyltransferase superfamily. Cation-dependent O-methyltransferase family. In terms of assembly, interacts with LHFPL5, PCDH15, TMC1, TMC2 and TMIE. Interacts directly with TMC1. The interaction of TOMT with TMC1 and TMC2 is required for the transportation of TMC1/2 into the stereocilia of hair cells.

The protein localises to the membrane. It is found in the cytoplasm. It localises to the endoplasmic reticulum. The catalysed reaction is a catechol + S-adenosyl-L-methionine = a guaiacol + S-adenosyl-L-homocysteine + H(+). In terms of biological role, catalyzes the O-methylation, and thereby the inactivation, of catecholamine neurotransmitters and catechol hormones. Required for auditory function. Component of the cochlear hair cell's mechanotransduction (MET) machinery. Involved in the assembly of the asymmetric tip-link MET complex. Required for transportation of TMC1 and TMC2 proteins into the mechanically sensitive stereocilia of the hair cells. The function in MET is independent of the enzymatic activity. This is Transmembrane O-methyltransferase from Homo sapiens (Human).